A 582-amino-acid chain; its full sequence is Protein bps2 (582 aa).

28 to 35 (APNAYGKT) contributes to the ATP binding site. Residues 243–281 (RQSYERQLQEINAQLQKITAQRNEAEIEIRLLEKVLDQI) are a coiled coil. The Zinc-hook domain occupies 243 to 351 (RQSYERQLQE…KLKELDQISS (109 aa)). Cys292 and Cys295 together coordinate Zn(2+). The stretch at 320–351 (SLYAGIKKEADELLSKKSEIEKKLKELDQISS) forms a coiled coil.

This is Protein bps2 (bps2) from Acidianus ambivalens (Desulfurolobus ambivalens).